Reading from the N-terminus, the 372-residue chain is MASVTLKNVCKAYGDVLISKNVDLQIDEGEFVVFVGPSGCGKSTLLRCIAGLEDITSGDLYIGDQRMNDVEPSKRGVGMVFQSYALYPHLNLYDNMSFGLKLAKADKAEIDKRVEHAAEILQLGHLLERQPKALSGGQRQRVAIGRTLVSQPNVFLLDEPLSNLDAALRVNMRAQITKLQRQLGCTMIYVTHDQVEAMTMADKIVVLDGGYVSQVGKPLELYHYPQNRFVAGFIGSPKMNFMSVFIDEVESERVKVQLSNGVSFWIPVDGTTVNRGDRMSLGIRPEHLLSATEADATIHGEVMIVEKLGNETQVYLNLEGADADVIYRQPDTLAVDTGDKLEIGIPAHRCHLFHSDGRACKRLFKENGVDFE.

The 231-residue stretch at 4–234 folds into the ABC transporter domain; the sequence is VTLKNVCKAY…PQNRFVAGFI (231 aa). An ATP-binding site is contributed by 36–43; sequence GPSGCGKS.

This sequence belongs to the ABC transporter superfamily. Maltooligosaccharide importer (TC 3.A.1.1.1) family. As to quaternary structure, the complex is composed of two ATP-binding proteins (MalK), two transmembrane proteins (MalG and MalK) and a solute-binding protein (MalE).

It localises to the cell inner membrane. It carries out the reaction D-maltose(out) + ATP + H2O = D-maltose(in) + ADP + phosphate + H(+). Its function is as follows. Part of the ABC transporter complex MalEFGK involved in maltose/maltodextrin import. Responsible for energy coupling to the transport system. This chain is Maltose/maltodextrin import ATP-binding protein MalK, found in Vibrio parahaemolyticus serotype O3:K6 (strain RIMD 2210633).